Consider the following 266-residue polypeptide: Glutamate racemase (266 aa).

Residues 9–10 (DS) and 41–42 (YG) contribute to the substrate site. Cysteine 72 (proton donor/acceptor) is an active-site residue. Position 73–74 (73–74 (NT)) interacts with substrate. Residue cysteine 184 is the Proton donor/acceptor of the active site. 185–186 (TH) contacts substrate.

It belongs to the aspartate/glutamate racemases family.

It carries out the reaction L-glutamate = D-glutamate. It functions in the pathway cell wall biogenesis; peptidoglycan biosynthesis. Its function is as follows. Provides the (R)-glutamate required for cell wall biosynthesis. The polypeptide is Glutamate racemase (Staphylococcus haemolyticus (strain JCSC1435)).